We begin with the raw amino-acid sequence, 702 residues long: Polyribonucleotide nucleotidyltransferase 3 (702 aa).

Mg(2+) is bound by residues aspartate 483 and aspartate 489. The region spanning 550–609 is the KH domain; it reads PKVTQIKVHPDKVREVIGAGGKVINKIIDETGCKITIENDGTIYVAAPDQESSRRAVEMI. Positions 619-687 constitute an S1 motif domain; sequence GEVYTGKVIK…PQGKIGLSRK (69 aa).

This sequence belongs to the polyribonucleotide nucleotidyltransferase family. Mg(2+) serves as cofactor.

Its subcellular location is the cytoplasm. The enzyme catalyses RNA(n+1) + phosphate = RNA(n) + a ribonucleoside 5'-diphosphate. Involved in mRNA degradation. Catalyzes the phosphorolysis of single-stranded polyribonucleotides processively in the 3'- to 5'-direction. This is Polyribonucleotide nucleotidyltransferase 3 from Alkaliphilus metalliredigens (strain QYMF).